Consider the following 320-residue polypeptide: Putative sporulation hydrolase CotR (320 aa).

The PNPLA domain occupies 7–182; that stretch reads MTFDGGGTLG…VATNPSTASI (176 aa). A GXGXXG motif is present at residues 11 to 16; sequence GGGTLG. The short motif at 42 to 46 is the GXSXG element; the sequence is GNSIG. The Nucleophile role is filled by S44. D169 (proton acceptor) is an active-site residue.

It localises to the spore coat. In Bacillus subtilis (strain 168), this protein is Putative sporulation hydrolase CotR (cotR).